The sequence spans 157 residues: SsrA-binding protein (157 aa).

Residues 131–157 (KQLHDKRDTEKKRDWSREKGRIMRARG) are disordered. Residues 132–151 (QLHDKRDTEKKRDWSREKGR) are compositionally biased toward basic and acidic residues.

The protein belongs to the SmpB family.

It is found in the cytoplasm. Required for rescue of stalled ribosomes mediated by trans-translation. Binds to transfer-messenger RNA (tmRNA), required for stable association of tmRNA with ribosomes. tmRNA and SmpB together mimic tRNA shape, replacing the anticodon stem-loop with SmpB. tmRNA is encoded by the ssrA gene; the 2 termini fold to resemble tRNA(Ala) and it encodes a 'tag peptide', a short internal open reading frame. During trans-translation Ala-aminoacylated tmRNA acts like a tRNA, entering the A-site of stalled ribosomes, displacing the stalled mRNA. The ribosome then switches to translate the ORF on the tmRNA; the nascent peptide is terminated with the 'tag peptide' encoded by the tmRNA and targeted for degradation. The ribosome is freed to recommence translation, which seems to be the essential function of trans-translation. This is SsrA-binding protein from Rhodopseudomonas palustris (strain BisB18).